A 442-amino-acid polypeptide reads, in one-letter code: UDP-N-acetylmuramate--L-alanine ligase (442 aa).

Position 109–115 (Gly109–Ser115) interacts with ATP.

Belongs to the MurCDEF family.

It localises to the cytoplasm. The enzyme catalyses UDP-N-acetyl-alpha-D-muramate + L-alanine + ATP = UDP-N-acetyl-alpha-D-muramoyl-L-alanine + ADP + phosphate + H(+). It functions in the pathway cell wall biogenesis; peptidoglycan biosynthesis. Cell wall formation. The sequence is that of UDP-N-acetylmuramate--L-alanine ligase from Streptococcus pyogenes serotype M18 (strain MGAS8232).